The sequence spans 313 residues: Ribonuclease Z (313 aa).

Zn(2+) is bound by residues H63, H65, D67, H68, H142, D212, and H270. The Proton acceptor role is filled by D67.

It belongs to the RNase Z family. Homodimer. It depends on Zn(2+) as a cofactor.

The enzyme catalyses Endonucleolytic cleavage of RNA, removing extra 3' nucleotides from tRNA precursor, generating 3' termini of tRNAs. A 3'-hydroxy group is left at the tRNA terminus and a 5'-phosphoryl group is left at the trailer molecule.. Zinc phosphodiesterase, which displays some tRNA 3'-processing endonuclease activity. Probably involved in tRNA maturation, by removing a 3'-trailer from precursor tRNA. This Enterococcus faecalis (strain ATCC 700802 / V583) protein is Ribonuclease Z.